A 1265-amino-acid chain; its full sequence is MECPVMETGSLFTSGIKRHLKDKRISKTTKLNVSLASKIKTKILNNSSIFKISLKHNNRALAQALSREKENSRRITTEKMLLQKEVEKLNFENTFLRLKLNNLNKKLIDIEALMNNNLITAIEMSSLSEFHQSSFLLSASKKKRISKQCKLMRLPFARVPLTSNDDEDEDKEKMQCDNNIKSKTLPDIPSSGSTTQPLSTQDNSEVLFLKENNQNVYGLDDSEHISSIVDVPPRESHSHSDQSSKTSLMSEMRNAQSIGRRWEKPSPSNVTERKKRGSSWESNNLSADTPCATVLDKQHISSPELNCNNEINGHTNETNTEMQRNKQDLPGLSSESAREPNAECMNQIEDNDDFQLQKTVYDADMDLTASEVSKIVTVSTGIKKKSNKKTNEHGMKTFRKVKDSSSEKKRERSKRQFKNSSDVDIGEKIENRTERSDVLDGKRGAEDPGFIFNNEQLAQMNEQLAQVNELKKMTLQTGFEQGDRENVLCNKKEKRITNEQEETYSLSQSSGKFHQESKFDKGQNSLTCNKSKASRQTFVIHKLEKDNLLPNQKDKVTIYENLDVTNEFHTANLSTKDNGNLCDYGTHNILDLKKYVTDIQPSEQNESNINKLRKKVNRKTEIISGMNHMYEDNDKDVVHGLKKGNFFFKTQEDKEPISENIEVSKELQIPALSTRDNENQCDYRTQNVLGLQKQITNMYPVQQNESKVNKKLRQKVNRKTEIISEVNHLDNDKSIEYTVKSHSLFLTQKDKEIIPGNLEDPSEFETPALSTKDSGNLYDSEIQNVLGVKHGHDMQPACQNDSKIGKKPRLNVCQKSEIIPETNQIYENDNKGVHDLEKDNFFSLTPKDKETISENLQVTNEFQTVDLLIKDNGNLCDYDTQNILELKKYVTDRKSAEQNESKINKLRNKVNWKTEIISEMNQIYEDNDKDAHVQESYTKDLDFKVNKSKQKLECQDIINKHYMEVNSNEKESCDQILDSYKVVKKRKKESSCKAKNILTKAKNKLASQLTESSQTSISLESDLKHITSEADSDPGNPVELCKTQKQSTTTLNKKDLPFVEEIKEGECQVKKVNKMTSKSKKRKTSIDPSPESHEVMERILDSVQGKSTVSEQADKENNLENEKMVKNKPDFYTKAFRSLSEIHSPNIQDSSFDSVREGLVPLSVSSGKNVIIKENFALECSPAFQVSDDEHEKMNKMKFKVNRRTQKSGIGDRPLQDLSNTSFVSNNTAESENKSEDLSSERTSRRRRCTPFYFKEPSLRDKMRR.

A coiled-coil region spans residues 69–116; sequence KENSRRITTEKMLLQKEVEKLNFENTFLRLKLNNLNKKLIDIEALMNN. Disordered regions lie at residues 161-202, 230-287, 305-339, and 381-447; these read LTSN…STQD, DVPP…NLSA, LNCN…SARE, and GIKK…GAED. Polar residues predominate over residues 190-202; that stretch reads SSGSTTQPLSTQD. Residues 232–242 show a composition bias toward basic and acidic residues; the sequence is PPRESHSHSDQ. Positions 305-322 are enriched in polar residues; sequence LNCNNEINGHTNETNTEM. 2 stretches are compositionally biased toward basic and acidic residues: residues 389–410 and 425–446; these read KTNE…EKKR and IGEK…RGAE. Residues 452-476 adopt a coiled-coil conformation; the sequence is FNNEQLAQMNEQLAQVNELKKMTLQ. Positions 499–526 are disordered; the sequence is EQEETYSLSQSSGKFHQESKFDKGQNSL. The span at 503 to 512 shows a compositional bias: polar residues; it reads TYSLSQSSGK. The stretch at 603-626 forms a coiled coil; it reads EQNESNINKLRKKVNRKTEIISGM. Basic residues predominate over residues 1073–1083; the sequence is NKMTSKSKKRK. The segment at 1073–1093 is disordered; that stretch reads NKMTSKSKKRKTSIDPSPESH. Ser-1144 carries the phosphoserine modification. The segment at 1200–1265 is disordered; it reads KVNRRTQKSG…EPSLRDKMRR (66 aa). A compositionally biased stretch (polar residues) spans 1217-1230; sequence DLSNTSFVSNNTAE. The span at 1231–1243 shows a compositional bias: basic and acidic residues; that stretch reads SENKSEDLSSERT.

It belongs to the shugoshin family. In terms of assembly, part of an astrin (SPAG5) -kinastrin (SKAP) complex containing KNSTRN, SPAG5, PLK1, DYNLL1 and SGO2. Interacts with CDCA8. Directly interacts with PPP2CA.

It is found in the nucleus. Its subcellular location is the chromosome. It localises to the centromere. The protein resides in the kinetochore. In terms of biological role, cooperates with PPP2CA to protect centromeric cohesin from separase-mediated cleavage in oocytes specifically during meiosis I. Has a crucial role in protecting REC8 at centromeres from cleavage by separase. During meiosis, protects centromeric cohesion complexes until metaphase II/anaphase II transition, preventing premature release of meiosis-specific REC8 cohesin complexes from anaphase I centromeres. Is thus essential for an accurate gametogenesis. May act by targeting PPP2CA to centromeres, thus leading to cohesin dephosphorylation. Essential for recruiting KIF2C to the inner centromere and for correcting defective kinetochore attachments. Involved in centromeric enrichment of AUKRB in prometaphase. The sequence is that of Shugoshin 2 from Homo sapiens (Human).